Here is a 304-residue protein sequence, read N- to C-terminus: Nod factor export ATP-binding protein I (304 aa).

Residues 6-236 enclose the ABC transporter domain; sequence IDFRNVEKRY…EIGCDVIEIY (231 aa). Residue 38–45 participates in ATP binding; sequence GPNGAGKT.

Belongs to the ABC transporter superfamily. Lipooligosaccharide exporter (TC 3.A.1.102) family. The complex is composed of two ATP-binding proteins (NodI) and two transmembrane proteins (NodJ).

It localises to the cell inner membrane. Functionally, part of the ABC transporter complex NodIJ involved in the export of the nodulation factors (Nod factors), the bacterial signal molecules that induce symbiosis and subsequent nodulation induction. Nod factors are LCO (lipo-chitin oligosaccharide), a modified beta-1,4-linked N-acetylglucosamine oligosaccharide. This subunit is responsible for energy coupling to the transport system. This Burkholderia orbicola (strain AU 1054) protein is Nod factor export ATP-binding protein I.